We begin with the raw amino-acid sequence, 219 residues long: Thiamine-phosphate synthase (219 aa).

4-amino-2-methyl-5-(diphosphooxymethyl)pyrimidine contacts are provided by residues 48 to 52 (QFRQK) and N84. Mg(2+)-binding residues include D85 and D104. S123 is a binding site for 4-amino-2-methyl-5-(diphosphooxymethyl)pyrimidine. 150–152 (TQS) contributes to the 2-[(2R,5Z)-2-carboxy-4-methylthiazol-5(2H)-ylidene]ethyl phosphate binding site. K153 contacts 4-amino-2-methyl-5-(diphosphooxymethyl)pyrimidine. Residues G181 and 199–200 (IS) each bind 2-[(2R,5Z)-2-carboxy-4-methylthiazol-5(2H)-ylidene]ethyl phosphate.

Belongs to the thiamine-phosphate synthase family. It depends on Mg(2+) as a cofactor.

It carries out the reaction 2-[(2R,5Z)-2-carboxy-4-methylthiazol-5(2H)-ylidene]ethyl phosphate + 4-amino-2-methyl-5-(diphosphooxymethyl)pyrimidine + 2 H(+) = thiamine phosphate + CO2 + diphosphate. The enzyme catalyses 2-(2-carboxy-4-methylthiazol-5-yl)ethyl phosphate + 4-amino-2-methyl-5-(diphosphooxymethyl)pyrimidine + 2 H(+) = thiamine phosphate + CO2 + diphosphate. It catalyses the reaction 4-methyl-5-(2-phosphooxyethyl)-thiazole + 4-amino-2-methyl-5-(diphosphooxymethyl)pyrimidine + H(+) = thiamine phosphate + diphosphate. It functions in the pathway cofactor biosynthesis; thiamine diphosphate biosynthesis; thiamine phosphate from 4-amino-2-methyl-5-diphosphomethylpyrimidine and 4-methyl-5-(2-phosphoethyl)-thiazole: step 1/1. In terms of biological role, condenses 4-methyl-5-(beta-hydroxyethyl)thiazole monophosphate (THZ-P) and 2-methyl-4-amino-5-hydroxymethyl pyrimidine pyrophosphate (HMP-PP) to form thiamine monophosphate (TMP). This is Thiamine-phosphate synthase from Helicobacter pylori (strain Shi470).